The sequence spans 1190 residues: Plakophilin-4 (1190 aa).

Positions 1–32 (MPAPEQGSLVEEGQPQTHQEAVSTGPGMEPET) are disordered. The stretch at 36–63 (TILASVKEQELQFQRLTRELEVERQIVA) forms a coiled coil. The interval 73 to 347 (AESPSIASTS…KRSGMTAVPQ (275 aa)) is disordered. The residue at position 75 (Ser-75) is a Phosphoserine. Over residues 77–86 (SIASTSSTEK) the composition is skewed to polar residues. Thr-84 carries the phosphothreonine modification. Phosphoserine is present on residues Ser-106, Ser-132, Ser-136, and Ser-139. Composition is skewed to polar residues over residues 138-156 (GSLG…SDSG), 163-203 (FHNS…QPSV), and 213-229 (SVPS…STGV). Ser-220, Ser-230, and Ser-235 each carry phosphoserine. Residues 230-241 (SPSRGSLRTSLG) are compositionally biased toward low complexity. Polar residues predominate over residues 247 to 266 (PSVTDSRPLNPSAYSSSTLP). Residues Arg-253 and Arg-269 each carry the omega-N-methylarginine modification. Ser-272, Ser-280, Ser-313, Ser-326, and Ser-336 each carry phosphoserine. Over residues 289 to 323 (SVTSRQTSNPNGPVPQYQTTTRVGSPLTLTDAQTR) the composition is skewed to polar residues. Positions 324 to 337 (VASPSQGQVGSSSP) are enriched in low complexity. Tyr-371 is subject to Phosphotyrosine. A phosphoserine mark is found at Ser-391, Ser-402, and Ser-405. Thr-411 bears the Phosphothreonine mark. Tyr-414 is subject to Phosphotyrosine. Phosphoserine is present on residues Ser-421, Ser-426, and Ser-437. Position 477 is a phosphotyrosine (Tyr-477). Residues Ser-509, Ser-511, and Ser-514 each carry the phosphoserine modification. ARM repeat units follow at residues 517–556 (KDPR…HLCF), 559–598 (NKVK…NLVF), and 603–643 (DENK…NLSS). Over residues 772–781 (GKESPSKDSE) the composition is skewed to basic and acidic residues. The interval 772–809 (GKESPSKDSEPSCWGKKKKKKKRTPQEDQWDGVGPIPG) is disordered. Position 775 is a phosphoserine (Ser-775). An ARM 4 repeat occupies 861 to 900 (AYIRAAVRKEKGLPILVELLRMDNDRVVSSVATALRNMAL). 2 positions are modified to phosphothreonine: Thr-1012 and Thr-1016. Phosphoserine occurs at positions 1044, 1090, 1099, and 1133.

This sequence belongs to the beta-catenin family. In terms of assembly, interacts (via the C-terminus) with FRMPD2 (via the PDZ 2 domain). Interacts with PDZD2. Interacts with RHOA; the interaction is detected at the midbody. Interacts with ECT2; the interaction is detected at the midbody. Interacts with CCDC85B.

It localises to the cell junction. The protein resides in the desmosome. It is found in the cytoplasm. Its subcellular location is the cytoskeleton. The protein localises to the spindle. It localises to the spindle pole. The protein resides in the midbody. It is found in the cell membrane. In terms of biological role, plays a role as a regulator of Rho activity during cytokinesis. May play a role in junctional plaques. The sequence is that of Plakophilin-4 (Pkp4) from Mus musculus (Mouse).